Here is a 153-residue protein sequence, read N- to C-terminus: MAKLGYKVEADPSKTAKAMGRTLRISKKHALEICREINGMKLETAVSFLNRVLALETPVPFKVHNKDVPHRKGKIGTHAGRFPQKATEEILKVLDNAKKNAEYKGLNTEKLRIKHISSNKGFIIKRFMPRAFGRASPKYQETIHIQVILEEFY.

The protein belongs to the universal ribosomal protein uL22 family. In terms of assembly, part of the 50S ribosomal subunit.

Functionally, this protein binds specifically to 23S rRNA. It makes multiple contacts with different domains of the 23S rRNA in the assembled 50S subunit and ribosome. Its function is as follows. The globular domain of the protein is located near the polypeptide exit tunnel on the outside of the subunit, while an extended beta-hairpin is found that lines the wall of the exit tunnel in the center of the 70S ribosome. This chain is Large ribosomal subunit protein uL22, found in Methanococcus vannielii (strain ATCC 35089 / DSM 1224 / JCM 13029 / OCM 148 / SB).